A 211-amino-acid polypeptide reads, in one-letter code: uncharacterized protein (211 aa).

The first 20 residues, 1-20, serve as a signal peptide directing secretion; the sequence is MSRVQISTVLAIDTATPAVT.

This sequence to M.leprae ML0378.

This is an uncharacterized protein from Mycobacterium tuberculosis (strain CDC 1551 / Oshkosh).